A 244-amino-acid polypeptide reads, in one-letter code: 6-carboxyhexanoate--CoA ligase (244 aa).

This sequence belongs to the BioW family. As to quaternary structure, homodimer. Mg(2+) is required as a cofactor.

The enzyme catalyses heptanedioate + ATP + CoA = 6-carboxyhexanoyl-CoA + AMP + diphosphate. The protein operates within metabolic intermediate metabolism; pimeloyl-CoA biosynthesis; pimeloyl-CoA from pimelate: step 1/1. Catalyzes the transformation of pimelate into pimeloyl-CoA with concomitant hydrolysis of ATP to AMP. In Methanococcus maripaludis (strain DSM 14266 / JCM 13030 / NBRC 101832 / S2 / LL), this protein is 6-carboxyhexanoate--CoA ligase.